We begin with the raw amino-acid sequence, 278 residues long: Prohibitin-7, mitochondrial (278 aa).

Topologically, residues 1-14 are mitochondrial matrix; sequence MNVKKVPNVPGSPA. The helical; Signal-anchor for type II membrane protein transmembrane segment at 15-37 threads the bilayer; sequence LSALLKLGVIGGLGLYCIGSSMY. Residues 38–278 lie on the Mitochondrial intermembrane side of the membrane; the sequence is NVDGGHRAIV…NSSDLLISKQ (241 aa). Residues 186-220 are a coiled coil; the sequence is KEFTEAIEKKQVAAQEAERAKFIVEKAEQDKKSAI.

Belongs to the prohibitin family. Component of a prohibitin multimeric complex in mitochondrial membranes.

It localises to the mitochondrion inner membrane. In terms of biological role, prohibitin probably acts as a holdase/unfoldase for the stabilization of newly synthesized mitochondrial proteins. This Arabidopsis thaliana (Mouse-ear cress) protein is Prohibitin-7, mitochondrial (PHB7).